The chain runs to 324 residues: Phospho-N-acetylmuramoyl-pentapeptide-transferase (324 aa).

10 consecutive transmembrane segments (helical) span residues 9–29, 53–73, 77–97, 117–137, 147–167, 176–196, 201–221, 227–247, 253–273, and 304–324; these read TFAVAFIITVIGVPLFIPFLV, TMGAVVFITAMLISFLIFSFI, VSAATWLLFIALALFGALGFL, FLGQVAISILFYLVYHLNGFA, IEVDLGWFFVIFILFWLVGFS, LDGLVSGLSVIAFSAFGVIAF, MDVAIFCFAIVGGMLGFLLFN, IFMGDTGSLALGGSIAAISIL, LLLLIGIIFVIETASVILQVF, and VLTFWGIGLIGAIISVCVVIF.

Belongs to the glycosyltransferase 4 family. MraY subfamily. Mg(2+) is required as a cofactor.

The protein localises to the cell membrane. The catalysed reaction is UDP-N-acetyl-alpha-D-muramoyl-L-alanyl-gamma-D-glutamyl-meso-2,6-diaminopimeloyl-D-alanyl-D-alanine + di-trans,octa-cis-undecaprenyl phosphate = di-trans,octa-cis-undecaprenyl diphospho-N-acetyl-alpha-D-muramoyl-L-alanyl-D-glutamyl-meso-2,6-diaminopimeloyl-D-alanyl-D-alanine + UMP. It participates in cell wall biogenesis; peptidoglycan biosynthesis. Catalyzes the initial step of the lipid cycle reactions in the biosynthesis of the cell wall peptidoglycan: transfers peptidoglycan precursor phospho-MurNAc-pentapeptide from UDP-MurNAc-pentapeptide onto the lipid carrier undecaprenyl phosphate, yielding undecaprenyl-pyrophosphoryl-MurNAc-pentapeptide, known as lipid I. In Listeria monocytogenes serotype 4b (strain CLIP80459), this protein is Phospho-N-acetylmuramoyl-pentapeptide-transferase.